Reading from the N-terminus, the 183-residue chain is GTP cyclohydrolase 1 (183 aa).

3 residues coordinate Zn(2+): Cys-71, His-74, and Cys-142.

This sequence belongs to the GTP cyclohydrolase I family. As to quaternary structure, homomer.

It catalyses the reaction GTP + H2O = 7,8-dihydroneopterin 3'-triphosphate + formate + H(+). Its pathway is cofactor biosynthesis; 7,8-dihydroneopterin triphosphate biosynthesis; 7,8-dihydroneopterin triphosphate from GTP: step 1/1. This chain is GTP cyclohydrolase 1, found in Leptospira biflexa serovar Patoc (strain Patoc 1 / Ames).